The chain runs to 189 residues: Nucleolar protein 16 (189 aa).

Residues 1-33 (MARDVKKRGKPAYTNRRNRQKYLKKKDNKKKLS) are compositionally biased toward basic residues. The disordered stretch occupies residues 1-34 (MARDVKKRGKPAYTNRRNRQKYLKKKDNKKKLSK).

Belongs to the NOP16 family.

It is found in the nucleus. The protein localises to the nucleolus. This is Nucleolar protein 16 from Caenorhabditis elegans.